We begin with the raw amino-acid sequence, 330 residues long: Beta-ketoacyl-[acyl-carrier-protein] synthase III (330 aa).

Residues C114 and H257 contribute to the active site. The ACP-binding stretch occupies residues Q258–R262. The active site involves N287.

It belongs to the thiolase-like superfamily. FabH family. As to quaternary structure, homodimer.

The protein resides in the cytoplasm. The catalysed reaction is malonyl-[ACP] + acetyl-CoA + H(+) = 3-oxobutanoyl-[ACP] + CO2 + CoA. The protein operates within lipid metabolism; fatty acid biosynthesis. Its function is as follows. Catalyzes the condensation reaction of fatty acid synthesis by the addition to an acyl acceptor of two carbons from malonyl-ACP. Catalyzes the first condensation reaction which initiates fatty acid synthesis and may therefore play a role in governing the total rate of fatty acid production. Possesses both acetoacetyl-ACP synthase and acetyl transacylase activities. Its substrate specificity determines the biosynthesis of branched-chain and/or straight-chain of fatty acids. The polypeptide is Beta-ketoacyl-[acyl-carrier-protein] synthase III (Nitratidesulfovibrio vulgaris (strain ATCC 29579 / DSM 644 / CCUG 34227 / NCIMB 8303 / VKM B-1760 / Hildenborough) (Desulfovibrio vulgaris)).